Consider the following 513-residue polypeptide: Interferon alpha/beta receptor 2 (513 aa).

Residues 1–21 form the signal peptide; it reads MRSRCTVSAVGLLSLCLVVSA. The Extracellular portion of the chain corresponds to 22–242; that stretch reads SLETITPSAF…GQESGLSESA (221 aa). 2 cysteine pairs are disulfide-bonded: Cys39–Cys123 and Cys85–Cys93. Residues Asn42, Asn58, Asn65, Asn78, and Asn84 are each glycosylated (N-linked (GlcNAc...) asparagine). 3 N-linked (GlcNAc...) asparagine glycosylation sites follow: Asn149, Asn191, and Asn195. A disulfide bridge connects residues Cys210 and Cys227. Residues 243–263 traverse the membrane as a helical segment; it reads IVGITTSCLVVMVFVSTIVML. Residues 264 to 513 are Cytoplasmic-facing; that stretch reads KRIGYICLKD…ADVGDGYIMR (250 aa). Residues 334-402 form a disordered region; sequence GYTMHGLTGK…DPTGPYERRK (69 aa). Phosphotyrosine is present on Tyr335. Over residues 344–354 the composition is skewed to polar residues; the sequence is PLQQTSDTSAS. Residues 377 to 389 are compositionally biased toward low complexity; the sequence is GAEPELPTEAGAG. Ser403 is subject to Phosphoserine. The segment at 421–444 is mediates interaction with STAT2 (and required for the recruitment of USP18); that stretch reads GDNIIFNVNLNSVFLRVLHDEDAS. Residues Ser448 and Ser465 each carry the phosphoserine modification. A disordered region spans residues 458-513; the sequence is EGPQRTESDLRIAGGDRTQPPLPSLPSQDLWTEDGSSEKSDTSDSDADVGDGYIMR. Tyr510 bears the Phosphotyrosine mark.

Belongs to the type II cytokine receptor family. Heterodimer with IFNAR1; forming the receptor for type I interferon. Interacts with the transcriptional factors STAT1 and STAT2. Interacts with JAK1. Interacts with USP18; indirectly via STAT2, it negatively regulates the assembly of the ternary interferon-IFNAR1-IFNAR2 complex and therefore type I interferon signaling. Phosphorylated on tyrosine residues upon interferon binding. Phosphorylation at Tyr-335 or Tyr-510 are sufficient to mediate interferon dependent activation of STAT1, STAT2 and STAT3 leading to antiproliferative effects on many different cell types. Widely expressed. Detected in liver, testis, kidney, salivary gland, thymus, brain, lung and placenta. Isoform 1, isoform 2 and isoform 3 are expressed in brain.

The protein localises to the cell membrane. Its subcellular location is the secreted. In terms of biological role, together with IFNAR1, forms the heterodimeric receptor for type I interferons (including interferons alpha, beta, epsilon, omega and kappa). Type I interferon binding activates the JAK-STAT signaling cascade, resulting in transcriptional activation or repression of interferon-regulated genes that encode the effectors of the interferon response. Mechanistically, type I interferon-binding brings the IFNAR1 and IFNAR2 subunits into close proximity with one another, driving their associated Janus kinases (JAKs) (TYK2 bound to IFNAR1 and JAK1 bound to IFNAR2) to cross-phosphorylate one another. The activated kinases phosphorylate specific tyrosine residues on the intracellular domains of IFNAR1 and IFNAR2, forming docking sites for the STAT transcription factors (STAT1, STAT2 and STAT). STAT proteins are then phosphorylated by the JAKs, promoting their translocation into the nucleus to regulate expression of interferon-regulated genes. Its function is as follows. May be potent inhibitors of type I IFN receptor activity. The chain is Interferon alpha/beta receptor 2 (Ifnar2) from Mus musculus (Mouse).